The following is a 238-amino-acid chain: Sugar fermentation stimulation protein homolog (238 aa).

It belongs to the SfsA family.

This Haemophilus influenzae (strain 86-028NP) protein is Sugar fermentation stimulation protein homolog.